The sequence spans 137 residues: 5-hydroxyisourate hydrolase (137 aa).

Residues 1–23 (MLKRYLVLSVVTAAFSLPSLVYA) form the signal peptide. Positions 32, 70, and 134 each coordinate substrate.

It belongs to the transthyretin family. 5-hydroxyisourate hydrolase subfamily. Homotetramer.

It is found in the periplasm. It catalyses the reaction 5-hydroxyisourate + H2O = 5-hydroxy-2-oxo-4-ureido-2,5-dihydro-1H-imidazole-5-carboxylate + H(+). Functionally, catalyzes the hydrolysis of 5-hydroxyisourate (HIU) to 2-oxo-4-hydroxy-4-carboxy-5-ureidoimidazoline (OHCU). The chain is 5-hydroxyisourate hydrolase (hiuH) from Escherichia coli O157:H7.